Consider the following 286-residue polypeptide: 4-hydroxybenzoate octaprenyltransferase (286 aa).

7 helical membrane passes run Ile20 to Met40, Pro43 to Ile63, Leu83 to Cys103, Phe135 to Phe155, Gly160 to Tyr180, Val209 to Leu229, and Ile234 to Ile254.

It belongs to the UbiA prenyltransferase family. Mg(2+) serves as cofactor.

It is found in the cell inner membrane. It catalyses the reaction all-trans-octaprenyl diphosphate + 4-hydroxybenzoate = 4-hydroxy-3-(all-trans-octaprenyl)benzoate + diphosphate. Its pathway is cofactor biosynthesis; ubiquinone biosynthesis. Functionally, catalyzes the prenylation of para-hydroxybenzoate (PHB) with an all-trans polyprenyl group. Mediates the second step in the final reaction sequence of ubiquinone-8 (UQ-8) biosynthesis, which is the condensation of the polyisoprenoid side chain with PHB, generating the first membrane-bound Q intermediate 3-octaprenyl-4-hydroxybenzoate. This chain is 4-hydroxybenzoate octaprenyltransferase, found in Nitrosomonas eutropha (strain DSM 101675 / C91 / Nm57).